The primary structure comprises 201 residues: Large ribosomal subunit protein uL4 (201 aa).

A disordered region spans residues 44–71 (RAQKTRAEVTGSGKKPWRQKGTGRARSG).

The protein belongs to the universal ribosomal protein uL4 family. In terms of assembly, part of the 50S ribosomal subunit.

Its function is as follows. One of the primary rRNA binding proteins, this protein initially binds near the 5'-end of the 23S rRNA. It is important during the early stages of 50S assembly. It makes multiple contacts with different domains of the 23S rRNA in the assembled 50S subunit and ribosome. In terms of biological role, forms part of the polypeptide exit tunnel. The polypeptide is Large ribosomal subunit protein uL4 (Edwardsiella ictaluri (strain 93-146)).